Reading from the N-terminus, the 66-residue chain is MAKGKDAPRVRVILECTGCVRNAVSRGVSRYITQKNRHNTSKQLELRKFCPYCHKHMIHGEIKINK.

Belongs to the bacterial ribosomal protein bL33 family.

The protein resides in the plastid. It is found in the chloroplast. The polypeptide is Large ribosomal subunit protein bL33c (Jasminum nudiflorum (Winter jasmine)).